Consider the following 197-residue polypeptide: Putative eggshell protein (197 aa).

Positions M1–A17 are cleaved as a signal peptide.

The chain is Putative eggshell protein from Fasciola hepatica (Liver fluke).